The sequence spans 128 residues: Lymphocyte antigen 6 complex locus protein G5c (128 aa).

Residues 1-29 form the signal peptide; it reads MGAEYGCLPSTSQALYVILLIVLVRMSLV. Positions 37 to 128 constitute a UPAR/Ly6 domain; that stretch reads LRCYRCLLET…NPQNRVFYIP (92 aa). Disulfide bonds link cysteine 39–cysteine 66, cysteine 42–cysteine 51, cysteine 58–cysteine 85, cysteine 94–cysteine 111, and cysteine 112–cysteine 117. The N-linked (GlcNAc...) asparagine glycan is linked to asparagine 73.

In terms of assembly, forms oligomers. In terms of processing, N-glycosylated. Abundantly expressed in the epididymis.

It is found in the secreted. In terms of biological role, may have a role in hematopoietic cell differentiation. The polypeptide is Lymphocyte antigen 6 complex locus protein G5c (LY6G5C) (Canis lupus familiaris (Dog)).